The chain runs to 332 residues: Putative pumilio homolog 20 (332 aa).

The PUM-HD domain occupies 1-332; that stretch reads MAHQLRFAAA…NIASILNSIR (332 aa). 2 Pumilio repeats span residues 89–124 and 125–159; these read SDPD…FAAA and ILRR…AMYE. The stretch at 160-191 is one Pumilio 3; degenerate repeat; it reads HILHYASHIARDKHGNLALNDIITDAYRNKLF. 3 Pumilio repeats span residues 192–228, 229–266, and 267–303; these read DVIA…NIVV, SLRG…ELME, and CEGD…DLFW.

Its subcellular location is the cytoplasm. Its function is as follows. Sequence-specific RNA-binding protein that regulates translation and mRNA stability by binding the 3'-UTR of target mRNAs. In Arabidopsis thaliana (Mouse-ear cress), this protein is Putative pumilio homolog 20 (APUM20).